The primary structure comprises 94 residues: UPF0298 protein SZO_03600 (94 aa).

It belongs to the UPF0298 family.

The protein resides in the cytoplasm. The chain is UPF0298 protein SZO_03600 from Streptococcus equi subsp. zooepidemicus (strain H70).